The primary structure comprises 141 residues: Lutropin subunit beta (141 aa).

An N-terminal signal peptide occupies residues 1–20; sequence MERLQGLLLWLLLSPSVVWA. 6 disulfide bridges follow: C29–C77, C43–C92, C46–C130, C54–C108, C58–C110, and C113–C120. N-linked (GlcNAc...) asparagine glycosylation is present at N33.

The protein belongs to the glycoprotein hormones subunit beta family. Heterodimer of a common alpha chain and a unique beta chain which confers biological specificity to thyrotropin, lutropin, follitropin and gonadotropin.

Its subcellular location is the secreted. Functionally, promotes spermatogenesis and ovulation by stimulating the testes and ovaries to synthesize steroids. In Rattus norvegicus (Rat), this protein is Lutropin subunit beta (Lhb).